Consider the following 374-residue polypeptide: Putative glutamate--cysteine ligase 2 (374 aa).

Belongs to the glutamate--cysteine ligase type 2 family. YbdK subfamily.

The catalysed reaction is L-cysteine + L-glutamate + ATP = gamma-L-glutamyl-L-cysteine + ADP + phosphate + H(+). Functionally, ATP-dependent carboxylate-amine ligase which exhibits weak glutamate--cysteine ligase activity. The chain is Putative glutamate--cysteine ligase 2 from Laribacter hongkongensis (strain HLHK9).